Reading from the N-terminus, the 84-residue chain is UPF0320 protein YNR077C (84 aa).

The protein belongs to the UPF0320 family.

The sequence is that of UPF0320 protein YNR077C from Saccharomyces cerevisiae (strain ATCC 204508 / S288c) (Baker's yeast).